Consider the following 567-residue polypeptide: Interferon lambda receptor 1 (567 aa).

The first 22 residues, 1 to 22 (MSAWRIRVLATLCFLWQPRVHG), serve as a signal peptide directing secretion. Topologically, residues 23 to 229 (QLPPPQNVTL…YEGEWKFPFS (207 aa)) are extracellular. The Fibronectin type-III domain occupies 26–121 (PPQNVTLLSK…KSQFKEYHLD (96 aa)). Asn-29 is a glycosylation site (N-linked (GlcNAc...) asparagine). 3 disulfide bridges follow: Cys-74–Cys-82, Cys-86–Cys-149, and Cys-193–Cys-215. The N-linked (GlcNAc...) asparagine glycan is linked to Asn-141. A helical transmembrane segment spans residues 230 to 250 (ATIPVFVLLILLTSASIIWLL). Topologically, residues 251 to 567 (KQDAKHKKMP…YQHSHYMRRS (317 aa)) are cytoplasmic.

The protein belongs to the type II cytokine receptor family. Heterodimer with IL10RB.

It localises to the membrane. Its function is as follows. The IFNLR1/IL10RB dimer is a receptor for the cytokine ligands IFNL2 and IFNL3 and mediates their antiviral activity. The ligand/receptor complex stimulate the activation of the JAK/STAT signaling pathway leading to the expression of IFN-stimulated genes (ISG), which contribute to the antiviral state. Determines the cell type specificity of the lambda interferon action. Shows a more restricted pattern of expression in the epithelial tissues thereby limiting responses to lambda interferons primarily to epithelial cells of the respiratory, gastrointestinal, and reproductive tracts. The protein is Interferon lambda receptor 1 (IFNLR1) of Gallus gallus (Chicken).